Reading from the N-terminus, the 547-residue chain is MKNINPTQTAAWQALQQHFEQMKEVHIADLFANDANRFAAFSATFDDRMLVDYSKNRITSETLEKLQALAKETDLQSAIKSMFSGEKINRTEDRAVLHVALRNRSNTPIVVDGKDVMPEVNAVLAKMKAFSERIISGEWKGFTGKAITDVVNIGIGGSDLGPFMVTEALRPYKNHLKMHFVSNVDGTHIAETLKMLSPETTLFLVASKTFTTQETMTNAHSAREWFLTSGQQQDVAKHFAALSTNGEAVSEFGIDTDNMFEFWDWVGGRYSLWSAIGLSIALSIGYENFEKLLSGAHAMDRHFADTPEEKNLPILLALIGIWYNNFFGAETEAILPYDQYMHRFAAYFQQGNMESNGKYVDRAGNPVSYQTGPIIWGEPGTNGQHAFYQLIHQGTKLVPCDFIAPAVSHNQLGDHHSKLLSNFFAQTEALAFGKSREVVEKEFADAGKDAQSVEHIVPFKVFEGNRPTNSILLRDITPYSLGALIAMYEHKIFTQGAILNIFTFDQWGVELGKQLASRILPELADAAEVSSHDGSTNGLINLYKSWR.

E354 (proton donor) is an active-site residue. Catalysis depends on residues H385 and K513.

This sequence belongs to the GPI family.

It is found in the cytoplasm. The enzyme catalyses alpha-D-glucose 6-phosphate = beta-D-fructose 6-phosphate. Its pathway is carbohydrate biosynthesis; gluconeogenesis. The protein operates within carbohydrate degradation; glycolysis; D-glyceraldehyde 3-phosphate and glycerone phosphate from D-glucose: step 2/4. Its function is as follows. Catalyzes the reversible isomerization of glucose-6-phosphate to fructose-6-phosphate. The sequence is that of Glucose-6-phosphate isomerase from Erwinia tasmaniensis (strain DSM 17950 / CFBP 7177 / CIP 109463 / NCPPB 4357 / Et1/99).